Here is a 583-residue protein sequence, read N- to C-terminus: Moesin/ezrin/radixin homolog 1 (583 aa).

One can recognise an FERM domain in the interval 11–301 (MNVRVTTMDA…GNHELYMRRR (291 aa)). Disordered regions lie at residues 466 to 518 (TTTP…RTLA) and 539 to 558 (RDDT…VRQG). The segment covering 476–485 (EEEEDNEEEL) has biased composition (acidic residues). The span at 496–518 (DYSKDFDTDEHIKDPVEERRTLA) shows a compositional bias: basic and acidic residues. Threonine 564 carries the post-translational modification Phosphothreonine.

As to quaternary structure, interacts with cytoskeletal actin.

The protein localises to the cell junction. It is found in the adherens junction. The protein resides in the cell projection. Its subcellular location is the microvillus. It localises to the rhabdomere. The protein localises to the cell membrane. It is found in the cytoplasm. The protein resides in the cytoskeleton. Functionally, involved in connections of major cytoskeletal structures to the plasma membrane. The protein is Moesin/ezrin/radixin homolog 1 of Aedes aegypti (Yellowfever mosquito).